The sequence spans 1325 residues: Clustered mitochondria protein homolog (1325 aa).

Residues proline 311–leucine 573 form the Clu domain. Disordered regions lie at residues lysine 893–threonine 937, aspartate 1032–leucine 1063, and glutamine 1245–serine 1325. The segment covering serine 1265–histidine 1275 has biased composition (basic residues). Low complexity predominate over residues glutamine 1276–proline 1285. Over residues alanine 1314–serine 1325 the composition is skewed to basic residues.

This sequence belongs to the CLU family. May associate with the eukaryotic translation initiation factor 3 (eIF-3) complex.

Its subcellular location is the cytoplasm. In terms of biological role, mRNA-binding protein involved in proper cytoplasmic distribution of mitochondria. The sequence is that of Clustered mitochondria protein homolog from Malassezia globosa (strain ATCC MYA-4612 / CBS 7966) (Dandruff-associated fungus).